Here is a 405-residue protein sequence, read N- to C-terminus: uncharacterized protein (405 aa).

A run of 12 helical transmembrane segments spans residues isoleucine 19–valine 39, valine 47–leucine 67, isoleucine 85–leucine 105, alanine 107–glycine 127, glycine 156–tryptophan 176, glycine 178–isoleucine 198, glycine 224–phenylalanine 244, glycine 252–proline 272, valine 283–methionine 303, isoleucine 309–alanine 329, threonine 344–methionine 364, and tryptophan 366–leucine 386.

It belongs to the major facilitator superfamily. YhhS family.

The protein localises to the cell inner membrane. This is an uncharacterized protein from Escherichia coli O6:H1 (strain CFT073 / ATCC 700928 / UPEC).